A 364-amino-acid polypeptide reads, in one-letter code: Histidinol-phosphate aminotransferase (364 aa).

Position 220 is an N6-(pyridoxal phosphate)lysine (Lys220).

It belongs to the class-II pyridoxal-phosphate-dependent aminotransferase family. Histidinol-phosphate aminotransferase subfamily. Homodimer. Pyridoxal 5'-phosphate serves as cofactor.

It carries out the reaction L-histidinol phosphate + 2-oxoglutarate = 3-(imidazol-4-yl)-2-oxopropyl phosphate + L-glutamate. It functions in the pathway amino-acid biosynthesis; L-histidine biosynthesis; L-histidine from 5-phospho-alpha-D-ribose 1-diphosphate: step 7/9. This is Histidinol-phosphate aminotransferase from Stenotrophomonas maltophilia (strain R551-3).